The following is a 571-amino-acid chain: Membrane protein insertase YidC (571 aa).

Residues 4–24 (TRVFLIFAWLMVAVLLWMEWS) traverse the membrane as a helical segment. The segment at 29–76 (APTPAPTTTSAPAAAQSVPGATPGSVPNAQVPGAPGQAAVQAQASATP) is disordered. 2 stretches are compositionally biased toward low complexity: residues 34 to 43 (PTTTSAPAAA) and 57 to 76 (AQVP…SATP). 4 helical membrane passes run 369–389 (LVGN…LVLY), 440–460 (GGCL…WVLV), 483–503 (YFIL…LTPA), and 518–538 (PLVF…YWVV).

It belongs to the OXA1/ALB3/YidC family. Type 1 subfamily. As to quaternary structure, interacts with the Sec translocase complex via SecD. Specifically interacts with transmembrane segments of nascent integral membrane proteins during membrane integration.

Its subcellular location is the cell inner membrane. In terms of biological role, required for the insertion and/or proper folding and/or complex formation of integral membrane proteins into the membrane. Involved in integration of membrane proteins that insert both dependently and independently of the Sec translocase complex, as well as at least some lipoproteins. Aids folding of multispanning membrane proteins. The sequence is that of Membrane protein insertase YidC from Stenotrophomonas maltophilia (strain R551-3).